The chain runs to 212 residues: Hevein-like preproprotein (212 aa).

The first 21 residues, methionine 1–glycine 21, serve as a signal peptide directing secretion. The Chitin-binding type-1 domain occupies glutamine 22 to glycine 64. 7 disulfide bridges follow: cysteine 24–cysteine 39, cysteine 33–cysteine 45, cysteine 38–cysteine 52, cysteine 58–cysteine 62, cysteine 100–cysteine 132, cysteine 121–cysteine 155, and cysteine 135–cysteine 191. The Barwin domain maps to glutamate 72–asparagine 193.

In terms of assembly, CB-HEL interacts strongly with a fungal fruiting body lectin.

The protein localises to the vacuole. Fungal growth inhibitors. Neither CB-HEL nor CD-HEL have chitinase activity, but both have antimicrobial activities. CD-HEL has RNase, but no DNase activity. This is Hevein-like preproprotein (HEL) from Arabidopsis thaliana (Mouse-ear cress).